The chain runs to 677 residues: DNA ligase (677 aa).

NAD(+) is bound by residues 38–42 (DYDFD), 87–88 (SL), and E121. Catalysis depends on K123, which acts as the N6-AMP-lysine intermediate. Residues R144, E187, K300, and K324 each coordinate NAD(+). 4 residues coordinate Zn(2+): C418, C421, C436, and C442. Residues 601 to 677 (LINSNFEGLS…ISEEEFEAML (77 aa)) form the BRCT domain.

Belongs to the NAD-dependent DNA ligase family. LigA subfamily. It depends on Mg(2+) as a cofactor. Mn(2+) serves as cofactor.

The enzyme catalyses NAD(+) + (deoxyribonucleotide)n-3'-hydroxyl + 5'-phospho-(deoxyribonucleotide)m = (deoxyribonucleotide)n+m + AMP + beta-nicotinamide D-nucleotide.. DNA ligase that catalyzes the formation of phosphodiester linkages between 5'-phosphoryl and 3'-hydroxyl groups in double-stranded DNA using NAD as a coenzyme and as the energy source for the reaction. It is essential for DNA replication and repair of damaged DNA. The sequence is that of DNA ligase from Chlorobium luteolum (strain DSM 273 / BCRC 81028 / 2530) (Pelodictyon luteolum).